The sequence spans 298 residues: Enoyl-CoA hydratase AKT6-1 (298 aa).

The interval 1-23 (MTFSTTKSVAMSPDDDAPSFDIN) is disordered.

The protein belongs to the enoyl-CoA hydratase/isomerase family.

Its pathway is mycotoxin biosynthesis. In terms of biological role, enoyl-CoA hydratase; part of the gene clusters that mediate the biosynthesis of the host-selective toxins (HSTs) AK-toxins responsible for Japanese pear black spot disease by the Japanese pear pathotype. AK-toxins are esters of 9,10-epoxy 8-hydroxy 9-methyldecatrienoic acid (EDA). On cellular level, AK-toxins affect plasma membrane of susceptible cells and cause a sudden increase in loss of K(+) after a few minutes of toxin treatment. The acyl-CoA ligase AKT1, the hydrolase AKT2 and enoyl-CoA hydratase AKT3 are all involved in the biosynthesis of the AK-, AF- and ACT-toxin common 9,10-epoxy-8-hydroxy-9-methyl-decatrienoic acid (EDA) structural moiety. Part of the EDA biosynthesis occurs in the peroxisome since these 3 enzymes are localized in peroxisomes. The exact roles of the 3 enzymes, as well as of additional AK-toxin clusters enzymes, including AKT4, AKT6 and AKTS1, have still to be elucidated. The Cytochrome P450 monooxygenase AKT7 on the other side functions to limit production of EDA and AK-toxin, probably via the catalysis of a side reaction of EDA or its precursor. This chain is Enoyl-CoA hydratase AKT6-1, found in Alternaria alternata (Alternaria rot fungus).